Consider the following 555-residue polypeptide: Putative ankyrin repeat protein L283 (555 aa).

ANK repeat units lie at residues 364–389, 390–420, 422–447, and 455–488; these read TKVNNIHQFIQKDEFKSAQKLLEDDI, VFKKVVDTAIKSNNQKTIKYLIDQQQFDINE, IKLALEENKLDIFNMLRLFNFDKVRC, and GYLEIVDKMMENDFEKINGDLVNIVLRNAAEGGK.

The protein is Putative ankyrin repeat protein L283 of Acanthamoeba polyphaga mimivirus (APMV).